The sequence spans 311 residues: 4-hydroxy-3-methylbut-2-enyl diphosphate reductase (311 aa).

C12 provides a ligand contact to [4Fe-4S] cluster. 2 residues coordinate (2E)-4-hydroxy-3-methylbut-2-enyl diphosphate: H43 and H81. 2 residues coordinate dimethylallyl diphosphate: H43 and H81. The isopentenyl diphosphate site is built by H43 and H81. C103 serves as a coordination point for [4Fe-4S] cluster. H131 contacts (2E)-4-hydroxy-3-methylbut-2-enyl diphosphate. H131 contacts dimethylallyl diphosphate. H131 contributes to the isopentenyl diphosphate binding site. E133 serves as the catalytic Proton donor. T170 lines the (2E)-4-hydroxy-3-methylbut-2-enyl diphosphate pocket. Residue C198 participates in [4Fe-4S] cluster binding. Residues S226, N228, and S271 each coordinate (2E)-4-hydroxy-3-methylbut-2-enyl diphosphate. Positions 226, 228, and 271 each coordinate dimethylallyl diphosphate. Positions 226, 228, and 271 each coordinate isopentenyl diphosphate.

The protein belongs to the IspH family. It depends on [4Fe-4S] cluster as a cofactor.

It catalyses the reaction isopentenyl diphosphate + 2 oxidized [2Fe-2S]-[ferredoxin] + H2O = (2E)-4-hydroxy-3-methylbut-2-enyl diphosphate + 2 reduced [2Fe-2S]-[ferredoxin] + 2 H(+). It carries out the reaction dimethylallyl diphosphate + 2 oxidized [2Fe-2S]-[ferredoxin] + H2O = (2E)-4-hydroxy-3-methylbut-2-enyl diphosphate + 2 reduced [2Fe-2S]-[ferredoxin] + 2 H(+). It functions in the pathway isoprenoid biosynthesis; dimethylallyl diphosphate biosynthesis; dimethylallyl diphosphate from (2E)-4-hydroxy-3-methylbutenyl diphosphate: step 1/1. It participates in isoprenoid biosynthesis; isopentenyl diphosphate biosynthesis via DXP pathway; isopentenyl diphosphate from 1-deoxy-D-xylulose 5-phosphate: step 6/6. Its function is as follows. Catalyzes the conversion of 1-hydroxy-2-methyl-2-(E)-butenyl 4-diphosphate (HMBPP) into a mixture of isopentenyl diphosphate (IPP) and dimethylallyl diphosphate (DMAPP). Acts in the terminal step of the DOXP/MEP pathway for isoprenoid precursor biosynthesis. The protein is 4-hydroxy-3-methylbut-2-enyl diphosphate reductase of Brevibacillus brevis (strain 47 / JCM 6285 / NBRC 100599).